Consider the following 346-residue polypeptide: Fe(3+) ions import ATP-binding protein FbpC 2 (346 aa).

The 231-residue stretch at 5–235 (LEVDGVDKSF…PVDVPTAEFI (231 aa)) folds into the ABC transporter domain. Residue 37–44 (GPSGCGKT) participates in ATP binding.

This sequence belongs to the ABC transporter superfamily. Fe(3+) ion importer (TC 3.A.1.10) family. In terms of assembly, the complex is composed of two ATP-binding proteins (FbpC), two transmembrane proteins (FbpB) and a solute-binding protein (FbpA).

It localises to the cell membrane. The enzyme catalyses Fe(3+)(out) + ATP + H2O = Fe(3+)(in) + ADP + phosphate + H(+). Functionally, part of the ABC transporter complex FbpABC involved in Fe(3+) ions import. Responsible for energy coupling to the transport system. This chain is Fe(3+) ions import ATP-binding protein FbpC 2, found in Rhodococcus jostii (strain RHA1).